We begin with the raw amino-acid sequence, 192 residues long: MSEITLPEYQSIAAELKSASLAVTPAELHGLLVGMLSGGLAINDQTWQPILFDYTNEGMGWPSSALGLAQSVFQVTVNELTGTSMELSLLLPDEAGEEGLFALADGVSDFVNHFISGMGLAGIAIYKASDDAKEALTDLEEIAKLGIDEDDDLGEQALLLEQVIEHVKACVLTIHAEFGARPESNENKPTIH.

It belongs to the UPF0149 family.

This chain is UPF0149 protein VIBHAR_03551, found in Vibrio campbellii (strain ATCC BAA-1116).